A 165-amino-acid polypeptide reads, in one-letter code: UPF0303 protein BMA1246 (165 aa).

It belongs to the UPF0303 family.

The polypeptide is UPF0303 protein BMA1246 (Burkholderia mallei (strain ATCC 23344)).